The chain runs to 145 residues: Protein SprT-like (145 aa).

Residues 4–140 (TNYVQEVSLA…VCGNCHGKLI (137 aa)) form the SprT-like domain. His64 serves as a coordination point for Zn(2+). The active site involves Glu65. His68 serves as a coordination point for Zn(2+).

It belongs to the SprT family. The cofactor is Zn(2+).

It is found in the cytoplasm. The sequence is that of Protein SprT-like from Streptococcus pyogenes serotype M6 (strain ATCC BAA-946 / MGAS10394).